Reading from the N-terminus, the 345-residue chain is Uroporphyrinogen decarboxylase (345 aa).

Substrate is bound by residues 26–30, Asp76, Tyr151, Ser205, and His321; that span reads RQAGR.

This sequence belongs to the uroporphyrinogen decarboxylase family. In terms of assembly, homodimer.

The protein resides in the cytoplasm. It catalyses the reaction uroporphyrinogen III + 4 H(+) = coproporphyrinogen III + 4 CO2. It participates in porphyrin-containing compound metabolism; protoporphyrin-IX biosynthesis; coproporphyrinogen-III from 5-aminolevulinate: step 4/4. Functionally, catalyzes the decarboxylation of four acetate groups of uroporphyrinogen-III to yield coproporphyrinogen-III. This is Uroporphyrinogen decarboxylase from Phenylobacterium zucineum (strain HLK1).